Reading from the N-terminus, the 61-residue chain is Photosystem II reaction center protein K (61 aa).

The propeptide occupies 1-24 (MLNIFCLICICLNSTLYSSSFFFA). The chain crosses the membrane as a helical span at residues 32–52 (FFNPIIDVMPIIPVLFFLLAF).

The protein belongs to the PsbK family. As to quaternary structure, PSII is composed of 1 copy each of membrane proteins PsbA, PsbB, PsbC, PsbD, PsbE, PsbF, PsbH, PsbI, PsbJ, PsbK, PsbL, PsbM, PsbT, PsbX, PsbY, PsbZ, Psb30/Ycf12, at least 3 peripheral proteins of the oxygen-evolving complex and a large number of cofactors. It forms dimeric complexes.

The protein resides in the plastid. It localises to the chloroplast thylakoid membrane. In terms of biological role, one of the components of the core complex of photosystem II (PSII). PSII is a light-driven water:plastoquinone oxidoreductase that uses light energy to abstract electrons from H(2)O, generating O(2) and a proton gradient subsequently used for ATP formation. It consists of a core antenna complex that captures photons, and an electron transfer chain that converts photonic excitation into a charge separation. The sequence is that of Photosystem II reaction center protein K from Phalaenopsis aphrodite subsp. formosana (Moth orchid).